We begin with the raw amino-acid sequence, 549 residues long: Glucose-6-phosphate isomerase (549 aa).

Residue E355 is the Proton donor of the active site. Residues H386 and K514 contribute to the active site.

Belongs to the GPI family.

The protein localises to the cytoplasm. The catalysed reaction is alpha-D-glucose 6-phosphate = beta-D-fructose 6-phosphate. The protein operates within carbohydrate biosynthesis; gluconeogenesis. Its pathway is carbohydrate degradation; glycolysis; D-glyceraldehyde 3-phosphate and glycerone phosphate from D-glucose: step 2/4. Catalyzes the reversible isomerization of glucose-6-phosphate to fructose-6-phosphate. This is Glucose-6-phosphate isomerase from Sodalis glossinidius (strain morsitans).